A 297-amino-acid chain; its full sequence is Nitrogenase iron protein 2 (297 aa).

14 to 21 contacts ATP; that stretch reads GKGGIGKS. Cysteine 102 is a binding site for [4Fe-4S] cluster. Residue arginine 105 is modified to ADP-ribosylarginine; by dinitrogenase reductase ADP-ribosyltransferase. Cysteine 136 serves as a coordination point for [4Fe-4S] cluster.

The protein belongs to the NifH/BchL/ChlL family. Homodimer. The cofactor is [4Fe-4S] cluster. Post-translationally, the reversible ADP-ribosylation of Arg-105 inactivates the nitrogenase reductase and regulates nitrogenase activity.

It catalyses the reaction N2 + 8 reduced [2Fe-2S]-[ferredoxin] + 16 ATP + 16 H2O = H2 + 8 oxidized [2Fe-2S]-[ferredoxin] + 2 NH4(+) + 16 ADP + 16 phosphate + 6 H(+). Its function is as follows. The key enzymatic reactions in nitrogen fixation are catalyzed by the nitrogenase complex, which has 2 components: the iron protein and the molybdenum-iron protein. In Nostoc sp. (strain PCC 7120 / SAG 25.82 / UTEX 2576), this protein is Nitrogenase iron protein 2 (nifH2).